Here is a 426-residue protein sequence, read N- to C-terminus: Probable indole-3-pyruvate monooxygenase YUCCA8 (426 aa).

29–34 (GAGPSG) serves as a coordination point for FAD. 199-204 (GCGNSG) provides a ligand contact to NADP(+).

This sequence belongs to the FMO family. It depends on FAD as a cofactor. As to expression, expressed in root tips and in hydathodes. Expressed in root vasculature and quiescent center, but not in the meristematic zone of the root tip.

The catalysed reaction is indole-3-pyruvate + NADPH + O2 + H(+) = (indol-3-yl)acetate + CO2 + NADP(+) + H2O. It participates in plant hormone metabolism; auxin biosynthesis. Functionally, involved in auxin biosynthesis. Belongs to the set of redundant YUCCA genes probably responsible for auxin biosynthesis in roots. This Arabidopsis thaliana (Mouse-ear cress) protein is Probable indole-3-pyruvate monooxygenase YUCCA8 (YUC8).